Reading from the N-terminus, the 135-residue chain is Large ribosomal subunit protein eL27x (135 aa).

It belongs to the eukaryotic ribosomal protein eL27 family.

This chain is Large ribosomal subunit protein eL27x (RPL27C), found in Arabidopsis thaliana (Mouse-ear cress).